A 229-amino-acid chain; its full sequence is Sodium channel modifier 1 (229 aa).

Residue S2 is modified to Phosphoserine. The short motif at 4–20 is the Bipartite nuclear localization signal element; the sequence is KREGDDWSQLNVLKKRR. Residues 42-74 form a Matrin-type zinc finger; the sequence is FACAICPHRPVLDTLAMLTAHRAGKKHLSSLKL. Residue K67 forms a Glycyl lysine isopeptide (Lys-Gly) (interchain with G-Cter in SUMO2) linkage. 2 disordered regions span residues 80–105 and 128–187; these read QTGK…EAPL and RRKH…TKRR. Positions 82-92 are enriched in polar residues; it reads GKGTEQNPRQQ. The segment covering 157-171 has biased composition (basic and acidic residues); sequence ISKEPEPRERSDAKE. A phosphoserine mark is found at S182 and S218. Residues 187–229 are required for interaction with LUC7L2; that stretch reads RVLNHYLTLRSSGWVPDGRGRWIKDENVEFDSDEEEPPDLPLD.

As to quaternary structure, component of the minor spliceosome. Within this complex, interacts with RNF113A, as well as with SF3B1/SF3b155, SF3B2/SF3b145, SF3B3/SF3b130 and CDC5L. May interact with LUC7L2 and SNRNP70.

Its subcellular location is the nucleus. The protein localises to the nucleoplasm. It localises to the nucleus speckle. Functionally, as a component of the minor spliceosome, involved in the splicing of U12-type introns in pre-mRNAs. Plays a role in the regulation of primary cilia length and Hedgehog signaling. The sequence is that of Sodium channel modifier 1 (Scnm1) from Mus musculus (Mouse).